The sequence spans 486 residues: Histone acetyltransferase type B catalytic subunit DDB_G0274269 (486 aa).

Residues 27-69 are a coiled coil; sequence DIEELKNKDNKENKDKENKAHIKDEGEEEEQKEKKEEEEKEDD. Over residues 33–50 the composition is skewed to basic and acidic residues; sequence NKDNKENKDKENKAHIKD. The disordered stretch occupies residues 33–78; sequence NKDNKENKDKENKAHIKDEGEEEEQKEKKEEEEKEDDGGPISFHPT. Residues 189–386 form the N-acetyltransferase domain; the sequence is VVFRYHEKLQ…YRISIKKRLY (198 aa). Residues 260–262 and 267–273 each bind acetyl-CoA; these read YLI and QRMGHGK. Catalysis depends on E299, which acts as the Proton donor/acceptor. A coiled-coil region spans residues 392-481; that stretch reads DSEQIEKIKQ…KNYHKTLSSL (90 aa).

It belongs to the HAT1 family.

It catalyses the reaction L-lysyl-[protein] + acetyl-CoA = N(6)-acetyl-L-lysyl-[protein] + CoA + H(+). The sequence is that of Histone acetyltransferase type B catalytic subunit DDB_G0274269 from Dictyostelium discoideum (Social amoeba).